A 615-amino-acid chain; its full sequence is DNA mismatch repair protein MutL (615 aa).

The disordered stretch occupies residues 363 to 397 (FAEPAAREPVAPRYTPAPASGSRPAAPWPNAQPGY). Positions 364 to 391 (AEPAAREPVAPRYTPAPASGSRPAAPWP) are enriched in low complexity.

This sequence belongs to the DNA mismatch repair MutL/HexB family.

In terms of biological role, this protein is involved in the repair of mismatches in DNA. It is required for dam-dependent methyl-directed DNA mismatch repair. May act as a 'molecular matchmaker', a protein that promotes the formation of a stable complex between two or more DNA-binding proteins in an ATP-dependent manner without itself being part of a final effector complex. This is DNA mismatch repair protein MutL from Shigella boydii serotype 4 (strain Sb227).